We begin with the raw amino-acid sequence, 689 residues long: DNA ligase (689 aa).

NAD(+) contacts are provided by residues 40-44 (DAEYD), 89-90 (SL), and E121. K123 functions as the N6-AMP-lysine intermediate in the catalytic mechanism. 4 residues coordinate NAD(+): R144, E179, K295, and K319. The Zn(2+) site is built by C413, C416, C431, and C437. Residues 610–689 (REQSSLTGKI…AEWLTLVRDI (80 aa)) form the BRCT domain.

It belongs to the NAD-dependent DNA ligase family. LigA subfamily. Mg(2+) is required as a cofactor. Mn(2+) serves as cofactor.

The enzyme catalyses NAD(+) + (deoxyribonucleotide)n-3'-hydroxyl + 5'-phospho-(deoxyribonucleotide)m = (deoxyribonucleotide)n+m + AMP + beta-nicotinamide D-nucleotide.. Its function is as follows. DNA ligase that catalyzes the formation of phosphodiester linkages between 5'-phosphoryl and 3'-hydroxyl groups in double-stranded DNA using NAD as a coenzyme and as the energy source for the reaction. It is essential for DNA replication and repair of damaged DNA. The sequence is that of DNA ligase from Rickettsia bellii (strain OSU 85-389).